The following is a 131-amino-acid chain: Transcription antitermination protein NusB (131 aa).

The protein belongs to the NusB family.

Involved in transcription antitermination. Required for transcription of ribosomal RNA (rRNA) genes. Binds specifically to the boxA antiterminator sequence of the ribosomal RNA (rrn) operons. In Campylobacter hominis (strain ATCC BAA-381 / DSM 21671 / CCUG 45161 / LMG 19568 / NCTC 13146 / CH001A), this protein is Transcription antitermination protein NusB.